We begin with the raw amino-acid sequence, 437 residues long: Diaminopimelate decarboxylase (437 aa).

N6-(pyridoxal phosphate)lysine is present on K81. Pyridoxal 5'-phosphate-binding positions include G256 and 298–301 (EPGR). The substrate site is built by R301, R337, and Y341. Catalysis depends on C366, which acts as the Proton donor. The substrate site is built by E367 and Y396. A pyridoxal 5'-phosphate-binding site is contributed by Y396.

It belongs to the Orn/Lys/Arg decarboxylase class-II family. LysA subfamily. Homodimer. Requires pyridoxal 5'-phosphate as cofactor.

The catalysed reaction is meso-2,6-diaminopimelate + H(+) = L-lysine + CO2. Its pathway is amino-acid biosynthesis; L-lysine biosynthesis via DAP pathway; L-lysine from DL-2,6-diaminopimelate: step 1/1. Its function is as follows. Specifically catalyzes the decarboxylation of meso-diaminopimelate (meso-DAP) to L-lysine. This is Diaminopimelate decarboxylase from Actinosynnema pretiosum subsp. auranticum.